The following is a 946-amino-acid chain: DDB1- and CUL4-associated factor 5 (946 aa).

WD repeat units follow at residues glycine 51–valine 91, glutamate 99–phenylalanine 139, alanine 140–proline 180, asparagine 185–leucine 225, phenylalanine 277–glycine 317, and glycine 331–glycine 370. The tract at residues glycine 449 to aspartate 478 is disordered. The span at serine 454–leucine 465 shows a compositional bias: polar residues. Residue threonine 500 is modified to Phosphothreonine. Disordered stretches follow at residues leucine 527–valine 656, serine 675–threonine 860, and cysteine 894–threonine 946. 2 positions are modified to phosphoserine: serine 531 and serine 533. Positions serine 531–threonine 544 are enriched in acidic residues. Residues proline 555–serine 567 show a composition bias toward low complexity. Residues alanine 579–lysine 592 are compositionally biased toward basic residues. The span at leucine 625–serine 638 shows a compositional bias: low complexity. 3 positions are modified to phosphoserine: serine 626, serine 628, and serine 645. Positions glutamate 691 to asparagine 701 are enriched in basic and acidic residues. Polar residues-rich tracts occupy residues glycine 760–glycine 769 and threonine 808–threonine 819.

As to quaternary structure, interacts with DDB1, CUL4A or CUL4B. Interacts with L3MBTL3. Interacts with SOX2. Interacts with DNMT1. Interacts with E2F1.

It functions in the pathway protein modification; protein ubiquitination. Its function is as follows. Is a substrate receptor for the CUL4-DDB1 E3 ubiquitin-protein ligase complex (CRL4), involved in the ubiquitination of a set of methylated non-histone proteins, including SOX2. The complex CRL4-DCAF5 is also involved in the ubiquitination of methylated DNMT1 and E2F1. The chain is DDB1- and CUL4-associated factor 5 (Dcaf5) from Mus musculus (Mouse).